The chain runs to 293 residues: Acidic endochitinase SE2 (293 aa).

The N-terminal stretch at 1 to 25 (MAAKIVSVLFLISLLIFASFESSHG) is a signal peptide. A GH18 domain is found at 26-293 (SQIVIYWGQN…GYSSAIKSSV (268 aa)). 2 disulfide bridges follow: Cys-45-Cys-91 and Cys-75-Cys-81. Glu-151 functions as the Proton donor in the catalytic mechanism. Cys-183 and Cys-212 form a disulfide bridge.

Belongs to the glycosyl hydrolase 18 family. Chitinase class II subfamily. Accumulates in leaves during infection.

Its subcellular location is the secreted. It localises to the extracellular space. The catalysed reaction is Random endo-hydrolysis of N-acetyl-beta-D-glucosaminide (1-&gt;4)-beta-linkages in chitin and chitodextrins.. Its function is as follows. This protein functions as a defense against chitin containing fungal pathogens. This endochitinase also exhibits exochitinase activity, i.e. it is capable of hydrolyzing chito-oligosaccharides, including chitobiose. The protein is Acidic endochitinase SE2 (SE2) of Beta vulgaris (Sugar beet).